Here is a 217-residue protein sequence, read N- to C-terminus: UPF0323 lipoprotein HPP12_0232 (217 aa).

An N-terminal signal peptide occupies residues 1 to 27 (MKKPYRKISDYAIVGGLSALVMVSIVG). Residue Cys-28 is the site of N-palmitoyl cysteine attachment. A lipid anchor (S-diacylglycerol cysteine) is attached at Cys-28. Residues 160-171 (QRTYKSPQAYQR) show a composition bias toward polar residues. Positions 160-217 (QRTYKSPQAYQRSQNSFSKSAPSASSMGTASKGQSGFFGSSRPTSSPAISSGTRGFNS) are disordered. Residues 172–185 (SQNSFSKSAPSASS) are compositionally biased toward low complexity. Over residues 186 to 197 (MGTASKGQSGFF) the composition is skewed to polar residues. Low complexity predominate over residues 199–210 (SSRPTSSPAISS).

The protein belongs to the UPF0323 family.

It localises to the cell membrane. The protein is UPF0323 lipoprotein HPP12_0232 of Helicobacter pylori (strain P12).